A 434-amino-acid polypeptide reads, in one-letter code: MPNFQKPFSGSSDGNSVMNDLGNKVAIKVFDCRSAQDGSEEQNVNVTTNQMYLMFQSNNYNVPPPNYNTEDLGSQGPPTHAYYAPFQHPIHLQPPVPPVYKNNTYSATDQYSDSSFPNTSGHTPVIDSNYYNDALASIPTTTTGSTTMTTDNGNTIDSEEYIDNMEVFSSEENENIDNVKQTDLKSEKDSSLLSAASIVKKEQLSGFENFLPLSKTESPLVTADEIKSSLNLENIDNADSMSFKLKTSPIRKHFHVKPKRITRVRTGRVSHNIIEKKYRSNINDKIEQLRRTVPTLRVAYKKCNDLPITSRDLADLDGLEPATKLNKASILTKSIEYICHLERKCLQLSLANQHLSNDTRDSFVHLTEPSQPLSDNSSSEQVQKQTRSCQRQRQRQPRQQQPLHNIQYNIPHQNGLMSGTNNSHDMDFNNAGDF.

The 76-residue stretch at 266-341 folds into the bHLH domain; that stretch reads TGRVSHNIIE…TKSIEYICHL (76 aa). Residues 365–434 form a disordered region; the sequence is HLTEPSQPLS…DMDFNNAGDF (70 aa). Composition is skewed to polar residues over residues 368–382 and 402–423; these read EPSQ…SEQV and PLHN…TNNS.

As to quaternary structure, interacts with the G1/S-specific cyclin PCL1. Post-translationally, phosphorylated by the cyclin-CDK complex PCL1-PHO85.

It is found in the nucleus. In terms of biological role, involved in exit from mitosis and pseudohyphal differentiation. This chain is Probable transcription factor HMS1 (HMS1), found in Saccharomyces cerevisiae (strain ATCC 204508 / S288c) (Baker's yeast).